A 557-amino-acid polypeptide reads, in one-letter code: Dihydroxy-acid dehydratase (557 aa).

Mg(2+) is bound at residue Asp78. Cys119 serves as a coordination point for [2Fe-2S] cluster. Mg(2+)-binding residues include Asp120 and Lys121. N6-carboxylysine is present on Lys121. Cys194 contacts [2Fe-2S] cluster. Residue Glu446 coordinates Mg(2+). The active-site Proton acceptor is the Ser472.

The protein belongs to the IlvD/Edd family. Homodimer. Requires [2Fe-2S] cluster as cofactor. Mg(2+) is required as a cofactor.

The catalysed reaction is (2R)-2,3-dihydroxy-3-methylbutanoate = 3-methyl-2-oxobutanoate + H2O. It carries out the reaction (2R,3R)-2,3-dihydroxy-3-methylpentanoate = (S)-3-methyl-2-oxopentanoate + H2O. It participates in amino-acid biosynthesis; L-isoleucine biosynthesis; L-isoleucine from 2-oxobutanoate: step 3/4. The protein operates within amino-acid biosynthesis; L-valine biosynthesis; L-valine from pyruvate: step 3/4. Functionally, functions in the biosynthesis of branched-chain amino acids. Catalyzes the dehydration of (2R,3R)-2,3-dihydroxy-3-methylpentanoate (2,3-dihydroxy-3-methylvalerate) into 2-oxo-3-methylpentanoate (2-oxo-3-methylvalerate) and of (2R)-2,3-dihydroxy-3-methylbutanoate (2,3-dihydroxyisovalerate) into 2-oxo-3-methylbutanoate (2-oxoisovalerate), the penultimate precursor to L-isoleucine and L-valine, respectively. The chain is Dihydroxy-acid dehydratase from Desulfosudis oleivorans (strain DSM 6200 / JCM 39069 / Hxd3) (Desulfococcus oleovorans).